The sequence spans 36 residues: Lambda-hexatoxin-Hv1b (36 aa).

4 cysteine pairs are disulfide-bonded: Cys-3–Cys-17, Cys-10–Cys-22, Cys-13–Cys-14, and Cys-16–Cys-33.

This sequence belongs to the neurotoxin 11 (kappa toxin) family. Expressed by the venom gland.

Its subcellular location is the secreted. Its function is as follows. This excitatory toxin inhibits insect calcium-activated potassium (KCa) channels (Slo-type). The polypeptide is Lambda-hexatoxin-Hv1b (Hadronyche versuta (Blue mountains funnel-web spider)).